The chain runs to 153 residues: Arginine repressor (153 aa).

The protein belongs to the ArgR family.

Its subcellular location is the cytoplasm. Its pathway is amino-acid biosynthesis; L-arginine biosynthesis [regulation]. In terms of biological role, regulates arginine biosynthesis genes. In Actinobacillus pleuropneumoniae serotype 5b (strain L20), this protein is Arginine repressor.